Reading from the N-terminus, the 415-residue chain is MGQRPQLRLVKALLLLGLNPVSTSLQDQQCESLSLASNVSGLQCNASVDLIGTCWPRSPAGQLVVRPCPAFFYGVRYNTTNNGYRECLANGSWAARVNYSECQEILNEEKKSKVHYHIAVIINYLGHCISLVALLVAFVLFLRLRSIRCLRNIIHWNLISAFILRNATWFVVQLTVSPEVHQSNVAWCRLVTAAYNYFHVTNFFWMFGEGCYLHTAIVLTYSTDRLRKWMFVCIGWGVPFPIIVAWAIGKLYYDNEKCWFGKRPGVYTDYIYQGPMILVLLINFIFLFNIVRILMTKLRASTTSETIQYRKAVKATLVLLPLLGITYMLFFVNPGEDEVSRVVFIYFNSFLESFQGFFVSVFYCFLNSEVRSAIRKRWRRWQDKHSIRARVARAMSIPTSPTRVSFHSIKQSTAV.

The N-terminal stretch at methionine 1–threonine 23 is a signal peptide. Topologically, residues serine 24–lysine 111 are extracellular. Disulfide bonds link cysteine 30–cysteine 54, cysteine 44–cysteine 87, and cysteine 68–cysteine 102. Asparagine 38, asparagine 45, asparagine 78, asparagine 90, and asparagine 98 each carry an N-linked (GlcNAc...) asparagine glycan. An important for peptide agonist binding region spans residues tyrosine 99–glutamate 108. A helical transmembrane segment spans residues serine 112–leucine 142. The Cytoplasmic portion of the chain corresponds to arginine 143 to cysteine 149. Residues leucine 150–leucine 174 traverse the membrane as a helical segment. The Extracellular segment spans residues threonine 175–arginine 189. The cysteines at positions 188 and 258 are disulfide-linked. A helical transmembrane segment spans residues leucine 190–valine 218. At leucine 219–arginine 225 the chain is on the cytoplasmic side. The helical transmembrane segment at leucine 226–tyrosine 253 threads the bilayer. Residues aspartate 254–aspartate 269 lie on the Extracellular side of the membrane. The helical transmembrane segment at tyrosine 270–methionine 295 threads the bilayer. Residues leucine 280 to isoleucine 290 form an important for antagonist binding region. Residues threonine 296–threonine 306 lie on the Cytoplasmic side of the membrane. Residue serine 301 is modified to Phosphoserine; by PKA. The helical transmembrane segment at isoleucine 307–phenylalanine 331 threads the bilayer. Residues valine 332–glutamate 338 lie on the Extracellular side of the membrane. The chain crosses the membrane as a helical span at residues valine 339–serine 368. Topologically, residues glutamate 369–valine 415 are cytoplasmic.

Belongs to the G-protein coupled receptor 2 family. In terms of assembly, heterodimer; heterodimerizes with GPER1. Interacts (via N-terminal extracellular domain) with CRH and UCN. Interacts with DLG1; this inhibits endocytosis of CRHR1 after agonist binding. C-terminal Ser or Thr residues may be phosphorylated. In terms of processing, phosphorylation at Ser-301 by PKA prevents maximal coupling to Gq-protein, and thereby negatively regulates downstream signaling. As to expression, detected in brain cortex (at protein level).

It localises to the cell membrane. The protein resides in the endosome. G-protein coupled receptor for CRH (corticotropin-releasing factor) and UCN (urocortin). Has high affinity for CRH and UCN. Ligand binding causes a conformation change that triggers signaling via guanine nucleotide-binding proteins (G proteins) and down-stream effectors, such as adenylate cyclase. Promotes the activation of adenylate cyclase, leading to increased intracellular cAMP levels. Inhibits the activity of the calcium channel CACNA1H. Required for normal embryonic development of the adrenal gland and for normal hormonal responses to stress. Plays a role in the response to anxiogenic stimuli. This Mus musculus (Mouse) protein is Corticotropin-releasing factor receptor 1 (Crhr1).